Consider the following 305-residue polypeptide: NAD kinase (305 aa).

Aspartate 76 acts as the Proton acceptor in catalysis. Residues 76 to 77 (DG), 150 to 151 (ND), arginine 161, and aspartate 180 contribute to the NAD(+) site.

This sequence belongs to the NAD kinase family. A divalent metal cation is required as a cofactor.

It is found in the cytoplasm. The catalysed reaction is NAD(+) + ATP = ADP + NADP(+) + H(+). Involved in the regulation of the intracellular balance of NAD and NADP, and is a key enzyme in the biosynthesis of NADP. Catalyzes specifically the phosphorylation on 2'-hydroxyl of the adenosine moiety of NAD to yield NADP. This Treponema pallidum (strain Nichols) protein is NAD kinase.